The following is a 445-amino-acid chain: tRNA(Ile)-lysidine synthase (445 aa).

38 to 43 provides a ligand contact to ATP; it reads SGGLDS.

Belongs to the tRNA(Ile)-lysidine synthase family.

The protein resides in the cytoplasm. The enzyme catalyses cytidine(34) in tRNA(Ile2) + L-lysine + ATP = lysidine(34) in tRNA(Ile2) + AMP + diphosphate + H(+). Its function is as follows. Ligates lysine onto the cytidine present at position 34 of the AUA codon-specific tRNA(Ile) that contains the anticodon CAU, in an ATP-dependent manner. Cytidine is converted to lysidine, thus changing the amino acid specificity of the tRNA from methionine to isoleucine. This chain is tRNA(Ile)-lysidine synthase, found in Neisseria gonorrhoeae (strain ATCC 700825 / FA 1090).